We begin with the raw amino-acid sequence, 123 residues long: Alpha-lactalbumin B/C (123 aa).

Residues 1 to 123 form the C-type lysozyme domain; it reads KQFTKCQLSQ…KLEQWLCEEL (123 aa). 4 cysteine pairs are disulfide-bonded: C6–C120, C28–C111, C61–C77, and C73–C91. Ca(2+)-binding residues include K79, D82, D84, D87, and D88.

This sequence belongs to the glycosyl hydrolase 22 family. As to quaternary structure, lactose synthase (LS) is a heterodimer of a catalytic component, beta1,4-galactosyltransferase (beta4Gal-T1) and a regulatory component, alpha-lactalbumin (LA). Mammary gland specific. Secreted in milk.

The protein resides in the secreted. Functionally, regulatory subunit of lactose synthase, changes the substrate specificity of galactosyltransferase in the mammary gland making glucose a good acceptor substrate for this enzyme. This enables LS to synthesize lactose, the major carbohydrate component of milk. In other tissues, galactosyltransferase transfers galactose onto the N-acetylglucosamine of the oligosaccharide chains in glycoproteins. The chain is Alpha-lactalbumin B/C from Equus caballus (Horse).